The chain runs to 607 residues: Large ribosomal subunit assembly factor BipA (607 aa).

In terms of domain architecture, tr-type G spans 3–198; it reads ENLRNIAIIA…AIVDHVPAPD (196 aa). GTP contacts are provided by residues 15–20 and 128–131; these read DHGKTT and NKVD. The segment at 481 to 607 is C-terminal domain (CTD), required but not sufficient to bind 70S or 30S ribosomes; sequence GQRQNGVLIS…RRANRGQKEE (127 aa).

The protein belongs to the TRAFAC class translation factor GTPase superfamily. Classic translation factor GTPase family. BipA subfamily. As to quaternary structure, monomer.

It is found in the cytoplasm. It catalyses the reaction GTP + H2O = GDP + phosphate + H(+). With respect to regulation, ribosome-associated GTPase is not affected by low levels of ppGpp, &gt;40 uM ppGpp and &gt;50 uM GDP inhibit GTPase. The C-terminus (residues 387-607 or 481-607) inhibits GTPase activity, in its absence kcat increases, but GTPase is no longer stimulated by 70S ribosome or 30S or 50S subunits. A 50S ribosomal subunit assembly protein with GTPase activity, required for 50S subunit assembly at low temperatures, may also play a role in translation. Binds GTP and analogs. Binds the 70S ribosome between the 30S and 50S subunits, in a similar position as ribosome-bound EF-G; it contacts a number of ribosomal proteins, both rRNAs and the A-site tRNA. A ribosome-stimulated GTPase, GTPase activity increases 4 fold in the presence of 70S ribosomes. Binds 70S ribosomes in the presence of GTP or its non-hydrolyzable analog GMPPNP; in the presence of ppGpp or under stress conditions it binds to 30S ribosomal subunits. The sequence is that of Large ribosomal subunit assembly factor BipA from Salmonella typhimurium (strain LT2 / SGSC1412 / ATCC 700720).